Here is an 884-residue protein sequence, read N- to C-terminus: Probable inorganic carbon transporter subunit DabA (884 aa).

Zn(2+)-binding residues include C390, D392, H582, and C597.

It belongs to the inorganic carbon transporter (TC 9.A.2) DabA family. As to quaternary structure, forms a complex with DabB. Zn(2+) is required as a cofactor.

It localises to the cell membrane. Part of an energy-coupled inorganic carbon pump. The protein is Probable inorganic carbon transporter subunit DabA of Staphylococcus saprophyticus subsp. saprophyticus (strain ATCC 15305 / DSM 20229 / NCIMB 8711 / NCTC 7292 / S-41).